Here is a 1546-residue protein sequence, read N- to C-terminus: Hybrid signal transduction histidine kinase D (1546 aa).

Positions 36–63 form a coiled coil; that stretch reads MRKQKPDHEKTREELIEEINHLRAVSNS. The PAS domain maps to 65-131; that stretch reads KNARIMLDEM…NIDNVREAVH (67 aa). One can recognise a PAC domain in the interval 139–193; sequence IRYETEIFGKSAGTEKITIDFSLMPLFNDKGEVSLILPEGRNITEKRLGELEIER. The region spanning 218–440 is the Histidine kinase 1 domain; it reads NVSHELRTPL…QFTLRLPLTP (223 aa). A Phosphohistidine; by autocatalysis modification is found at H221. The region spanning 571–686 is the Response regulatory 1 domain; sequence IVLVVEDNPE…ELVARVVNLM (116 aa). Residue D619 is modified to 4-aspartylphosphate. In terms of domain architecture, Histidine kinase 2 spans 747–1010; it reads NLSHELRTPL…QFTVVLPIIK (264 aa). H750 carries the phosphohistidine; by autocatalysis modification. 2 stretches are compositionally biased toward low complexity: residues 1013–1031 and 1042–1146; these read SSSNSSPSNQLSCSSSPPL and NYIN…SNNN. 3 disordered regions span residues 1013 to 1148, 1266 to 1285, and 1313 to 1350; these read SSSN…NNEK, NNSNNDDNSNNTTIPTPPSS, and PLSELKSSSNNNNNNNNNSNNNNNNSMSPNLRSPKANS. Residues 1313–1346 are compositionally biased toward low complexity; that stretch reads PLSELKSSSNNNNNNNNNSNNNNNNSMSPNLRSP. The Response regulatory 2 domain occupies 1359–1483; that stretch reads QIMLVDDLEE…ELSNSILTLI (125 aa). The residue at position 1412 (D1412) is a 4-aspartylphosphate. Residues 1500-1546 are disordered; sequence QNNNNNNNNNNNNNNNNNNNNNNINNGNDDDSLLLTDSRPCKKANSQ. Low complexity predominate over residues 1501–1526; the sequence is NNNNNNNNNNNNNNNNNNNNNNINNG.

It carries out the reaction ATP + protein L-histidine = ADP + protein N-phospho-L-histidine.. In terms of biological role, acts as a receptor histidine kinase for a signal transduction pathway. This protein undergoes an ATP-dependent autophosphorylation at a conserved histidine residue in the kinase core, and a phosphoryl group is then transferred to a conserved aspartate residue in the receiver domain. This chain is Hybrid signal transduction histidine kinase D (dhkD), found in Dictyostelium discoideum (Social amoeba).